A 537-amino-acid chain; its full sequence is 5,6-dihydroxyindole-2-carboxylic acid oxidase (537 aa).

An N-terminal signal peptide occupies residues 1-24 (MKSPTLLSLGYMFLVLLFFQQAWA). Over 25–477 (QFPRECATIE…WPSRSFSISE (453 aa)) the chain is Lumenal, melanosome. 5 disulfides stabilise this stretch: cysteine 30/cysteine 41, cysteine 42/cysteine 65, cysteine 56/cysteine 99, cysteine 101/cysteine 110, and cysteine 113/cysteine 122. Asparagine 96 and asparagine 104 each carry an N-linked (GlcNAc...) asparagine glycan. Asparagine 181 carries an N-linked (GlcNAc...) asparagine glycan. Residues histidine 192, histidine 215, and histidine 224 each contribute to the Zn(2+) site. Cystine bridges form between cysteine 258/cysteine 261 and cysteine 290/cysteine 303. N-linked (GlcNAc...) asparagine glycosylation is found at asparagine 304 and asparagine 350. Zn(2+) contacts are provided by histidine 377 and histidine 381. The N-linked (GlcNAc...) asparagine glycan is linked to asparagine 385. Histidine 404 contributes to the Zn(2+) binding site. The helical transmembrane segment at 478-501 (IVTIAVVAALSLVAVIFAGASCLI) threads the bilayer. Residues 502-537 (RARSNMDEANQPLLTDQYQHYIEEYEKIHNPNQSVV) lie on the Cytoplasmic side of the membrane.

It belongs to the tyrosinase family. Monomer. Interacts with ATP7A. Interacts with SLC45A2. Cu(2+) is required as a cofactor. The cofactor is Zn(2+). Post-translationally, glycosylated.

It localises to the melanosome membrane. It carries out the reaction 2 5,6-dihydroxyindole-2-carboxylate + O2 = 2 indole-5,6-quinone-2-carboxylate + 2 H2O. It participates in pigment biosynthesis; melanin biosynthesis. Plays a role in melanin biosynthesis. Catalyzes the oxidation of 5,6-dihydroxyindole-2-carboxylic acid (DHICA) into indole-5,6-quinone-2-carboxylic acid. May regulate or influence the type of melanin synthesized. Also to a lower extent, capable of hydroxylating tyrosine and producing melanin. In Bos taurus (Bovine), this protein is 5,6-dihydroxyindole-2-carboxylic acid oxidase (TYRP1).